Reading from the N-terminus, the 339-residue chain is Lymphocyte-specific protein 1 (339 aa).

Positions 1-198 (MAEASSDPGA…SPPLSPTTKL (198 aa)) are disordered. A Phosphoserine modification is found at S24. Basic and acidic residues-rich tracts occupy residues 32-43 (VHEQCQHERDRQ) and 51-61 (GGGHVPERPKQ). The residue at position 111 (S111) is a Phosphoserine. Residues 117–140 (EDRPGLHAYEKEDSDEVHLEELSL) show a composition bias toward basic and acidic residues. Residue T175 is modified to Phosphothreonine. Residues S177, S188, S189, and S193 each carry the phosphoserine modification. Residues 185–196 (IEQSSPPLSPTT) show a composition bias toward polar residues. At S252 the chain carries Phosphoserine; by MAPKAPK2. Residues 294–315 (KSLWEQKGGSKTSSTIKSTPSG) form a disordered region. Low complexity predominate over residues 300-315 (KGGSKTSSTIKSTPSG). The residue at position 327 (K327) is an N6-acetyllysine.

Binds actin. Post-translationally, phosphorylated by casein kinase II, protein kinase C and MAPKAPK2. Phosphorylation by PKC induces translocation from membrane to cytoplasm. Phosphorylation by MAPKAPK2 may regulate neutrophil chemotaxis. In terms of tissue distribution, activated T-lymphocytes.

It localises to the cell membrane. In terms of biological role, may play a role in mediating neutrophil activation and chemotaxis. This chain is Lymphocyte-specific protein 1 (LSP1), found in Homo sapiens (Human).